The following is a 386-amino-acid chain: Succinate--CoA ligase [ADP-forming] subunit beta (386 aa).

Positions 9–244 (KQILKKYGAV…LNEEDPTEID (236 aa)) constitute an ATP-grasp domain. Residues Lys46, 53–55 (GRG), Glu99, Ser102, and Glu107 each bind ATP. Mg(2+) is bound by residues Asn199 and Asp213. Residues Asn264 and 321–323 (GIM) contribute to the substrate site.

This sequence belongs to the succinate/malate CoA ligase beta subunit family. As to quaternary structure, heterotetramer of two alpha and two beta subunits. The cofactor is Mg(2+).

The catalysed reaction is succinate + ATP + CoA = succinyl-CoA + ADP + phosphate. It catalyses the reaction GTP + succinate + CoA = succinyl-CoA + GDP + phosphate. Its pathway is carbohydrate metabolism; tricarboxylic acid cycle; succinate from succinyl-CoA (ligase route): step 1/1. Succinyl-CoA synthetase functions in the citric acid cycle (TCA), coupling the hydrolysis of succinyl-CoA to the synthesis of either ATP or GTP and thus represents the only step of substrate-level phosphorylation in the TCA. The beta subunit provides nucleotide specificity of the enzyme and binds the substrate succinate, while the binding sites for coenzyme A and phosphate are found in the alpha subunit. This is Succinate--CoA ligase [ADP-forming] subunit beta from Pelagibacter ubique (strain HTCC1062).